Consider the following 380-residue polypeptide: Glutamine synthetase, chloroplastic (380 aa).

The region spanning 35–125 is the GS beta-grasp domain; that stretch reads MAAEYIWADG…VMCEVFAPDG (91 aa). Residues 132-380 enclose the GS catalytic domain; it reads TRAKLREIID…RLLIKTVLKG (249 aa).

This sequence belongs to the glutamine synthetase family. As to quaternary structure, homooctamer.

The protein resides in the plastid. Its subcellular location is the chloroplast. It carries out the reaction L-glutamate + NH4(+) + ATP = L-glutamine + ADP + phosphate + H(+). The sequence is that of Glutamine synthetase, chloroplastic (GLN2) from Chlamydomonas reinhardtii (Chlamydomonas smithii).